A 212-amino-acid chain; its full sequence is Thymidylate kinase (212 aa).

10–17 (GPDGAGKT) is an ATP binding site.

The protein belongs to the thymidylate kinase family.

It catalyses the reaction dTMP + ATP = dTDP + ADP. In terms of biological role, phosphorylation of dTMP to form dTDP in both de novo and salvage pathways of dTTP synthesis. The protein is Thymidylate kinase of Exiguobacterium sibiricum (strain DSM 17290 / CCUG 55495 / CIP 109462 / JCM 13490 / 255-15).